We begin with the raw amino-acid sequence, 246 residues long: tRNA (guanine-N(7)-)-methyltransferase (246 aa).

A disordered region spans residues 1–26; that stretch reads MIENPSPSAANLPEHPSTDASHPRNI. S-adenosyl-L-methionine contacts are provided by E75, E100, D127, and D150. The active site involves D150. Position 154 (K154) interacts with substrate. The tract at residues 156-161 is interaction with RNA; the sequence is KHNKRR. Substrate-binding positions include D186 and 225 to 228; that span reads TKFE.

The protein belongs to the class I-like SAM-binding methyltransferase superfamily. TrmB family.

It catalyses the reaction guanosine(46) in tRNA + S-adenosyl-L-methionine = N(7)-methylguanosine(46) in tRNA + S-adenosyl-L-homocysteine. The protein operates within tRNA modification; N(7)-methylguanine-tRNA biosynthesis. Functionally, catalyzes the formation of N(7)-methylguanine at position 46 (m7G46) in tRNA. The protein is tRNA (guanine-N(7)-)-methyltransferase of Polaromonas sp. (strain JS666 / ATCC BAA-500).